Reading from the N-terminus, the 1050-residue chain is Toll-like receptor 7 (1050 aa).

The N-terminal stretch at 1–26 (MVFSMWTRKRQILIFLNMLLVSRVFG) is a signal peptide. At 27 to 837 (FRWFPKTLPC…SLDLYTCELD (811 aa)) the chain is on the extracellular side. LRR repeat units follow at residues 42–64 (IPEAHVIVDCTDKHLTEIPEGIP), 65–87 (TNTTNLTLTINHIPSISPDSFRR), 89–111 (NHLEEIDLRCNCVPVLLGSKANV), 126–149 (LSDLKALYLDGNQLLEIPQDLPSS), 151–170 (HLLSLEANNIFSITKENLTE), 171–195 (LVNIETLYLGQNCYYRNPCNVSYSI), 203–226 (MRNLKVLSLKDNNVTAVPTTLPPN), 228–247 (LELYLYNNIIKKIQENDFNN), 248–273 (LNELQVLDLSGNCPRCYNVPYPCTPC), 275–289 (NNSPLQIHDNAFNSL), 290–312 (TELKVLRLHSNSLQHVPPTWFKN), 314–337 (RNLQELDLSQNYLAREIEEAKFLH), 339–364 (LPNLVELDFSFNYELQVYHASITLPH), 369–392 (LENLKILRVKGYVFKELKNSSLSV), 396–419 (LPRLEVLDLGTNFIKIADLNIFKH), 421–443 (ENLKLIDLSVNKISPSEESREVG), 493–516 (HIYGQTLDLSRNNIFFIKPSDFQH), 517–542 (LSFLKCLNLSGNTIGQTLNGSELWPL), 543–565 (RELRYLDFSNNRLDLLYSTAFEE), and 567–589 (QSLEVLDLSSNSHYFQAEGITHM). N-linked (GlcNAc...) asparagine glycosylation is found at asparagine 66 and asparagine 69. Asparagine 167, asparagine 190, and asparagine 215 each carry an N-linked (GlcNAc...) asparagine glycan. An N-linked (GlcNAc...) asparagine glycan is attached at asparagine 387. N-linked (GlcNAc...) asparagine glycans are attached at residues asparagine 524 and asparagine 535. N-linked (GlcNAc...) asparagine glycosylation is present at asparagine 591. 8 LRR repeats span residues 596 to 619 (LRLLDKLMMNDNDISTSASRTMES), 620 to 645 (DSLRILEFRGNHLDVLWRAGDNRYLD), 650 to 673 (LFNLEVLDISRNSLNSLPPEVFEG), 675 to 698 (PPNLKNLSLAKNGLKSFFWDRLQL), 699 to 722 (LKHLEILDLSHNQLTKVPERLANC), 724 to 746 (KSLTTLILKHNQIRQLTKYFLED), 747 to 770 (ALQLRYLDISSNKIQVIQKTSFPE), and 773 to 796 (LNNLEMLVLHHNRFLCNCDAVWFV). Asparagine 680 and asparagine 721 each carry an N-linked (GlcNAc...) asparagine glycan. N-linked (GlcNAc...) asparagine glycosylation occurs at asparagine 800. The helical transmembrane segment at 838 to 858 (LTNLILFSVSISSVLFLMVVM) threads the bilayer. At 859–1050 (TTSHLFFWDM…AYSQMFKETV (192 aa)) the chain is on the cytoplasmic side. The TIR domain maps to 890–1034 (SCYDAFIVYD…YFWQCLKNAL (145 aa)).

The protein belongs to the Toll-like receptor family. In terms of assembly, homodimer. Interacts with MYD88 via their respective TIR domains. Interacts with UNC93B1. Interacts with SMPDL3B. In terms of processing, the first cleavage is performed by asparagine endopeptidase or cathepsin family members. This initial cleavage event is followed by a trimming event that is solely cathepsin mediated and required for optimal receptor signaling.

The protein localises to the endosome membrane. It localises to the endoplasmic reticulum membrane. The protein resides in the lysosome. Its subcellular location is the cytoplasmic vesicle. It is found in the phagosome. Activated by guanosine analogs including deoxyguanosine, 7-thia-8-oxoguanosine or 7-deazaguanosine in a RNA-independent manner. Its function is as follows. Endosomal receptor that plays a key role in innate and adaptive immunity. Controls host immune response against pathogens through recognition of uridine-containing single strand RNAs (ssRNAs) of viral origin or guanosine analogs. Upon binding to agonists, undergoes dimerization that brings TIR domains from the two molecules into direct contact, leading to the recruitment of TIR-containing downstream adapter MYD88 through homotypic interaction. In turn, the Myddosome signaling complex is formed involving IRAK4, IRAK1, TRAF6, TRAF3 leading to activation of downstream transcription factors NF-kappa-B and IRF7 to induce pro-inflammatory cytokines and interferons, respectively. In plasmacytoid dendritic cells, RNASET2 endonuclease cooperates with PLD3 or PLD4 5'-&gt;3' exonucleases to process RNA and release 2',3'-cyclic guanosine monophosphate (2',3'-cGMP) and cytidine-rich RNA fragments that occupy TLR7 ligand-binding pockets and trigger a signaling-competent state. The protein is Toll-like receptor 7 (Tlr7) of Mus musculus (Mouse).